We begin with the raw amino-acid sequence, 99 residues long: uncharacterized protein (99 aa).

Residues 10 to 29 form a helical membrane-spanning segment; the sequence is ELSVHTGTVTHTIFVYVFLG.

The protein localises to the membrane. This is an uncharacterized protein from Schizosaccharomyces pombe (strain 972 / ATCC 24843) (Fission yeast).